The following is a 309-amino-acid chain: Dicarboxylate carrier SLC25A8 (309 aa).

Over 1–16 (MVGFKATDVPPTATVK) the chain is Mitochondrial intermembrane. Solcar repeat units lie at residues 11–106 (PTAT…VKQF), 114–203 (ASIG…IKDA), and 212–297 (DDLP…LKRA). Residues 16 to 63 (KFLGAGTAACIADLITFPLDTAKVRLQIQGESQGPVRATASAQYRGVM) are important for interaction with long-chain fatty acids. A helical transmembrane segment spans residues 17-40 (FLGAGTAACIADLITFPLDTAKVR). At 41–77 (LQIQGESQGPVRATASAQYRGVMGTILTMVRTEGPRS) the chain is on the mitochondrial matrix side. The chain crosses the membrane as a helical span at residues 78 to 103 (LYNGLVAGLQRQMSFASVRIGLYDSV). At 104–119 (KQFYTKGSEHASIGSR) the chain is on the mitochondrial intermembrane side. The chain crosses the membrane as a helical span at residues 120 to 145 (LLAGSTTGALAVAVAQPTDVVKVRFQ). Over 146 to 173 (AQARAGGGRRYQSTVNAYKTIAREEGFR) the chain is Mitochondrial matrix. A helical transmembrane segment spans residues 174–199 (GLWKGTSPNVARNAIVNCAELVTYDL). Topologically, residues 200–217 (IKDALLKANLMTDDLPCH) are mitochondrial intermembrane. The chain crosses the membrane as a helical span at residues 218 to 242 (FTSAFGAGFCTTVIASPVDVVKTRY). Residues 243–268 (MNSALGQYSSAGHCALTMLQKEGPRA) lie on the Mitochondrial matrix side of the membrane. A helical membrane pass occupies residues 269–294 (FYKGFMPSFLRLGSWNVVMFVTYEQL). Residues 278-285 (LRLGSWNV) form an important for interaction with long-chain fatty acids region. At 295 to 309 (KRALMAACTSREAPF) the chain is on the mitochondrial intermembrane side.

It belongs to the mitochondrial carrier (TC 2.A.29) family. As to quaternary structure, homotetramer. Adopts an asymmetrical dimer of dimers functional form. As to expression, widely expressed in adult human tissues, including tissues rich in macrophages. Most expressed in white adipose tissue and skeletal muscle.

The protein resides in the mitochondrion inner membrane. It carries out the reaction L-aspartate(out) + phosphate(in) + H(+)(in) = L-aspartate(in) + phosphate(out) + H(+)(out). It catalyses the reaction oxaloacetate(out) + phosphate(in) + H(+)(in) = oxaloacetate(in) + phosphate(out) + H(+)(out). The catalysed reaction is (S)-malate(out) + phosphate(in) + H(+)(in) = (S)-malate(in) + phosphate(out) + H(+)(out). The enzyme catalyses malonate(out) + phosphate(in) + H(+)(in) = malonate(in) + phosphate(out) + H(+)(out). It carries out the reaction sulfate(out) + phosphate(in) + H(+)(in) = sulfate(in) + phosphate(out) + H(+)(out). It catalyses the reaction (S)-malate(out) = (S)-malate(in). The catalysed reaction is L-aspartate(out) = L-aspartate(in). The enzyme catalyses phosphate(in) = phosphate(out). It carries out the reaction chloride(in) = chloride(out). It catalyses the reaction H(+)(in) = H(+)(out). The catalysed reaction is a long-chain fatty acid(out) = a long-chain fatty acid(in). Inhibited by pyridoxal- 5'-phosphate, bathophenanthroline, tannic acid, bromocresol purple, butylmalonate and phenylsuccinate. Proton conductance is activated by cardiolipin and long-chain free fatty acids and inhibited by purine nucleotides ATP and ADP. Chloride ion transporter activity is inhibited by long-chain free fatty acids. In terms of biological role, antiporter that exports dicarboxylate intermediates of the Krebs cycle in exchange for phosphate plus a proton across the inner membrane of mitochondria, a process driven by mitochondrial motive force with an overall impact on glycolysis, glutaminolysis and glutathione-dependent redox balance. Continuous export of oxaloacetate and related four-carbon dicarboxylates from mitochondrial matrix into the cytosol negatively regulates the oxidation of acetyl-CoA substrates via the Krebs cycle, lowering the ATP/ADP ratio and reactive oxygen species (ROS) production. May mediate inducible proton entry into the mitochondrial matrix affecting ATP turnover as a protection mechanism against oxidative stress. The proton currents are most likely associated with fatty acid flipping across the inner membrane of mitochondria in a metabolic process regulated by free fatty acids and purine nucleotides. Regulates the use of glucose as a source of energy. Required for glucose-induced DRP1-dependent mitochondrial fission and neuron activation in the ventromedial nucleus of the hypothalamus (VMH). This mitochondrial adaptation mechanism modulates the VMH pool of glucose-excited neurons with an impact on systemic glucose homeostasis. Regulates ROS levels and metabolic reprogramming of macrophages during the resolution phase of inflammation. Attenuates ROS production in response to IL33 to preserve the integrity of the Krebs cycle required for persistent production of itaconate and subsequent GATA3-dependent differentiation of inflammation-resolving alternatively activated macrophages. Can unidirectionally transport anions including L-malate, L-aspartate, phosphate and chloride ions. Does not mediate adaptive thermogenesis. The polypeptide is Dicarboxylate carrier SLC25A8 (UCP2) (Homo sapiens (Human)).